The following is a 262-amino-acid chain: Carbonic anhydrase 13 (262 aa).

One can recognise an Alpha-carbonic anhydrase domain in the interval L4 to F261. The active-site Proton donor/acceptor is the H65. H95, H97, and H120 together coordinate Zn(2+). T200 to V201 provides a ligand contact to substrate.

This sequence belongs to the alpha-carbonic anhydrase family. Requires Zn(2+) as cofactor. In terms of tissue distribution, expressed in spleen, lung, kidney, heart, brain, skeletal muscle and testis.

The enzyme catalyses hydrogencarbonate + H(+) = CO2 + H2O. Its activity is regulated as follows. Inhibited by coumarins, sulfonamide derivatives such as acetazolamide (AZA) and Foscarnet (phosphonoformate trisodium salt). Reversible hydration of carbon dioxide. The polypeptide is Carbonic anhydrase 13 (Ca13) (Mus musculus (Mouse)).